A 196-amino-acid polypeptide reads, in one-letter code: Phosphoheptose isomerase (196 aa).

One can recognise an SIS domain in the interval 34-193 (LIETFKIGNK…EQGLFGIFAG (160 aa)). Residue 49–51 (NGG) participates in substrate binding. 2 residues coordinate Zn(2+): His58 and Glu62. Substrate contacts are provided by residues Glu62, 91 to 92 (ND), 117 to 119 (STS), Ser122, and Gln169. Residues Gln169 and His177 each contribute to the Zn(2+) site.

It belongs to the SIS family. GmhA subfamily. Homotetramer. Requires Zn(2+) as cofactor.

The protein localises to the cytoplasm. The enzyme catalyses 2 D-sedoheptulose 7-phosphate = D-glycero-alpha-D-manno-heptose 7-phosphate + D-glycero-beta-D-manno-heptose 7-phosphate. Its pathway is carbohydrate biosynthesis; D-glycero-D-manno-heptose 7-phosphate biosynthesis; D-glycero-alpha-D-manno-heptose 7-phosphate and D-glycero-beta-D-manno-heptose 7-phosphate from sedoheptulose 7-phosphate: step 1/1. Catalyzes the isomerization of sedoheptulose 7-phosphate in D-glycero-D-manno-heptose 7-phosphate. The chain is Phosphoheptose isomerase from Trichlorobacter lovleyi (strain ATCC BAA-1151 / DSM 17278 / SZ) (Geobacter lovleyi).